The primary structure comprises 93 residues: Cobalt transport protein CbiN (93 aa).

2 consecutive transmembrane segments (helical) span residues 5–25 (LILL…DHGG) and 62–82 (SLLF…ILGY).

The protein belongs to the CbiN family. In terms of assembly, forms an energy-coupling factor (ECF) transporter complex composed of an ATP-binding protein (A component, CbiO), a transmembrane protein (T component, CbiQ) and 2 possible substrate-capture proteins (S components, CbiM and CbiN) of unknown stoichimetry.

The protein resides in the cell inner membrane. Its pathway is cofactor biosynthesis; adenosylcobalamin biosynthesis. Functionally, part of the energy-coupling factor (ECF) transporter complex CbiMNOQ involved in cobalt import. This Citrobacter koseri (strain ATCC BAA-895 / CDC 4225-83 / SGSC4696) protein is Cobalt transport protein CbiN.